The primary structure comprises 57 residues: Andropin (57 aa).

The N-terminal stretch at 1-23 (MKYFVVLVVLALILAISVGPSDA) is a signal peptide.

It belongs to the andropin family. Ejaculatory duct of adult males.

Its subcellular location is the secreted. Male-specific peptide with moderate activity against Gram-positive bacteria. The protein is Andropin (Anp) of Drosophila melanogaster (Fruit fly).